A 421-amino-acid polypeptide reads, in one-letter code: Peptide chain release factor subunit 1 (421 aa).

Belongs to the eukaryotic release factor 1 family. In terms of assembly, heterodimer of two subunits, one of which binds GTP.

It is found in the cytoplasm. In terms of biological role, directs the termination of nascent peptide synthesis (translation) in response to the termination codons UAA, UAG and UGA. This is Peptide chain release factor subunit 1 (prf1) from Methanocaldococcus jannaschii (strain ATCC 43067 / DSM 2661 / JAL-1 / JCM 10045 / NBRC 100440) (Methanococcus jannaschii).